Reading from the N-terminus, the 652-residue chain is MHFFFVPNSSSSSPSPANTSSFSLSFLTPQIPENLCKSPTKIHIGTHGISGQSFLSHPTFSSKNTYLYAVVDRSSSGVFSPQKESANGEGEESNTEEGVLVVRRPLLENSDKESSEEEGKKYPARIDAGLSNIAKKMPIFEPERSESSSSSSAAAAARAQERPLAVNLDLSLYKAKVLARNFRYKDAEKILEKCIAYWPEDGRPYVALGKILSKQSKLAEARILYEKGCQSTQGENSYIWQCWAVLENRLGNVRRARELFDAATVADKKHVAAWHGWANLEIKQGNISKARNLLAKGLKFCGRNEYIYQTLALLEAKAGRYEQARYLFKQATICNSRSCASWLAWAQLEIQQERYPAARKLFEKAVQASPKNRFAWHVWGVFEAGVGNVERGRKLLKIGHALNPRDPVLLQSLGLLEYKHSSANLARALLRRASELDPRHQPVWIAWGWMEWKEGNTTTARELYQRALSIDANTESASRCLQAWGVLEQRAGNLSAARRLFRSSLNINSQSYVTWMTWAQLEEDQGDTERAEEIRNLYFQQRTEVVDDASWVTGFLDIIDPALDTVKRLLNFGQNNDNNRLTTTLRNMNRTKDSQSNQQPESSAGREDIETGSGFNLDVFLRSKLSLDPLKLDVNLDSKRLERFTRGRINGA.

Disordered regions lie at residues 1 to 21 (MHFF…NTSS) and 78 to 121 (VFSP…EGKK). The N-terminal 68 residues, 1 to 68 (MHFFFVPNSS…TFSSKNTYLY (68 aa)), are a transit peptide targeting the chloroplast. Over residues 105-121 (PLLENSDKESSEEEGKK) the composition is skewed to basic and acidic residues. TPR repeat units lie at residues 168-201 (LDLS…WPED), 202-235 (GRPY…TQGE), 237-270 (SYIW…DKKH), 271-304 (VAAW…CGRN), 305-338 (EYIY…NSRS), 339-372 (CASW…SPKN), 374-406 (FAWH…NPRD), 407-440 (PVLL…DPRH), 441-474 (QPVW…DANT), 478-511 (SRCL…NSQS), 543-576 (TEVV…GQNN), and 598-631 (QQPE…DPLK). The interval 585–610 (LRNMNRTKDSQSNQQPESSAGREDIE) is disordered.

As to quaternary structure, may form homomultimers. Part of a multi-subunit complex in the range of 60-190 and 600-800 kDa in chloroplast membranes.

Its subcellular location is the plastid. The protein localises to the chloroplast. It localises to the chloroplast membrane. The protein resides in the chloroplast stroma. Functionally, involved, directly or indirectly, in the processing of chloroplast encoded mRNAs. Exhibits sequence-specific RNA binding and RNA remodeling activities, probably leading to the activation of translation of the target gene cluster psbB-psbT-psbH-petB-petD. Blocks 5'-3' and 3'-5' exoribonucleases (e.g. polynucleotide phosphorylase (PNPase), RNase R) in vitro. Necessary for intercistronic RNA processing of the psbH 5' untranslated region or the stabilization of 5' processed psbH RNAs. Also required for the synthesis of psbB. This is Protein high chlorophyll fluorescent 107 from Arabidopsis thaliana (Mouse-ear cress).